A 270-amino-acid chain; its full sequence is (+)-cis,cis-nepetalactol synthase NEPS3 (270 aa).

NAD(+) contacts are provided by residues 21–27 (GGASGIG), 46–48 (DIQ), 70–71 (DV), asparagine 97, 165–169 (YVMSK), and 198–202 (VATPL).

This sequence belongs to the short-chain dehydrogenases/reductases (SDR) family. In terms of assembly, forms homotetramers.

It catalyses the reaction (S)-8-oxocitronellyl enol = cis-cis-nepetalactol. Functionally, functions as a non-oxidoreductive cyclase to promote the formation of cis-cis-nepetalactol. Cis-cis-nepetalactol is then oxidized by NEPS1 into cis-cis-nepetalactone, which belongs to a family of metabolites that are both insect-repellent and have euphoric effect in cats. Binds NAD(+) as classical short-chain dehydrogenase/reductase (SDR), but does not utilize it for its redox-neutral cyclase activity. The protein is (+)-cis,cis-nepetalactol synthase NEPS3 of Nepeta racemosa (Catmint).